The primary structure comprises 180 residues: Hypoxanthine-guanine phosphoribosyltransferase (180 aa).

Residues lysine 40, 99–107 (EDIVDSGLT), lysine 131, and aspartate 159 contribute to the GMP site. The Proton acceptor role is filled by aspartate 103. Aspartate 159 lines the Mg(2+) pocket.

Belongs to the purine/pyrimidine phosphoribosyltransferase family. Requires Mg(2+) as cofactor.

The protein localises to the cytoplasm. The catalysed reaction is IMP + diphosphate = hypoxanthine + 5-phospho-alpha-D-ribose 1-diphosphate. The enzyme catalyses GMP + diphosphate = guanine + 5-phospho-alpha-D-ribose 1-diphosphate. Its pathway is purine metabolism; IMP biosynthesis via salvage pathway; IMP from hypoxanthine: step 1/1. Its function is as follows. Converts guanine to guanosine monophosphate, and hypoxanthine to inosine monophosphate. Transfers the 5-phosphoribosyl group from 5-phosphoribosylpyrophosphate onto the purine. Plays a central role in the generation of purine nucleotides through the purine salvage pathway. The polypeptide is Hypoxanthine-guanine phosphoribosyltransferase (hprT) (Dictyostelium discoideum (Social amoeba)).